A 42-amino-acid polypeptide reads, in one-letter code: Photosystem II reaction center protein J (42 aa).

The chain crosses the membrane as a helical span at residues 10–30 (IPLWLVGTVVGTLAIGLLAVF).

This sequence belongs to the PsbJ family. In terms of assembly, PSII is composed of 1 copy each of membrane proteins PsbA, PsbB, PsbC, PsbD, PsbE, PsbF, PsbH, PsbI, PsbJ, PsbK, PsbL, PsbM, PsbT, PsbX, PsbY, PsbZ, Psb30/Ycf12, at least 3 peripheral proteins of the oxygen-evolving complex and a large number of cofactors. It forms dimeric complexes.

The protein localises to the plastid. The protein resides in the chloroplast thylakoid membrane. Functionally, one of the components of the core complex of photosystem II (PSII). PSII is a light-driven water:plastoquinone oxidoreductase that uses light energy to abstract electrons from H(2)O, generating O(2) and a proton gradient subsequently used for ATP formation. It consists of a core antenna complex that captures photons, and an electron transfer chain that converts photonic excitation into a charge separation. The sequence is that of Photosystem II reaction center protein J from Chlamydomonas reinhardtii (Chlamydomonas smithii).